An 87-amino-acid polypeptide reads, in one-letter code: Spermatid-specific protein S1 (87 aa).

The interval 1-36 (TKSRYRNRRSRPRRRYGRRMRKTRCRRKGRRISRRP) is disordered.

It is found in the nucleus. The protein localises to the chromosome. Functionally, involved in nuclear basic protein transition: histones are replaced by spermatid specific proteins which are themselves replaced by protamines in late spermatids. This chain is Spermatid-specific protein S1, found in Scyliorhinus canicula (Small-spotted catshark).